The sequence spans 127 residues: Modulator protein MzrA (127 aa).

Residues 1–10 (MVISPLALRR) lie on the Cytoplasmic side of the membrane. The helical transmembrane segment at 11–31 (LSYGLIALVLLSALILVWTAL) threads the bilayer. The Periplasmic portion of the chain corresponds to 32-127 (QRQESTLAIR…RLRDTSHRFG (96 aa)).

This sequence belongs to the MzrA family. As to quaternary structure, interacts with EnvZ.

Its subcellular location is the cell inner membrane. Its function is as follows. Modulates the activity of the EnvZ/OmpR two-component regulatory system, probably by directly modulating EnvZ enzymatic activity and increasing stability of phosphorylated OmpR. The sequence is that of Modulator protein MzrA from Enterobacter sp. (strain 638).